Consider the following 831-residue polypeptide: Multiphosphoryl transfer protein (831 aa).

An HPr domain is found at 1–90; it reads MLTIQFLCPL…EYIQVRFIDS (90 aa). Histidine 15 (pros-phosphohistidine intermediate; for HPr activity) is an active-site residue. Histidine 15 is subject to Phosphohistidine; by EI. A PTS EI region spans residues 119 to 650; sequence GNVLASGVGV…AVKSQLRQLD (532 aa). Histidine 298 acts as the Tele-phosphohistidine intermediate; for PTS EI activity in catalysis. At histidine 298 the chain carries Phosphohistidine; by autocatalysis. Phosphoenolpyruvate contacts are provided by arginine 405 and arginine 441. Residues glutamate 540 and aspartate 564 each contribute to the Mg(2+) site. Phosphoenolpyruvate is bound by residues 563–564 and arginine 574; that span reads ND. The active-site Proton donor; for EI activity is the cysteine 611. Residues 685-828 enclose the PTS EIIA type-2 domain; sequence PLLALENIFV…QSILTLLETE (144 aa). Residue histidine 747 is the Tele-phosphohistidine intermediate; for PTS EIIA activity of the active site. Histidine 747 is modified (phosphohistidine; by HPr).

The protein belongs to the PEP-utilizing enzyme family. Mg(2+) serves as cofactor.

It localises to the cytoplasm. The enzyme catalyses L-histidyl-[protein] + phosphoenolpyruvate = N(pros)-phospho-L-histidyl-[protein] + pyruvate. It carries out the reaction D-fructose(out) + N(pros)-phospho-L-histidyl-[protein] = D-fructose 1-phosphate(in) + L-histidyl-[protein]. Its function is as follows. Multifunctional protein that includes general (non sugar-specific) and sugar-specific components of the phosphoenolpyruvate-dependent sugar phosphotransferase system (sugar PTS). This major carbohydrate active transport system catalyzes the phosphorylation of incoming sugar substrates concomitantly with their translocation across the cell membrane. The enzyme II FryABC PTS system is involved in fructose transport. This chain is Multiphosphoryl transfer protein (fryA), found in Escherichia coli O157:H7.